The primary structure comprises 85 residues: ATP synthase subunit c (85 aa).

The next 2 helical transmembrane spans lie at 19-39 (LGAALGAGLAVIGAGIGIGKI) and 62-82 (IIAAALVEGVALLALVVCLLV).

Belongs to the ATPase C chain family. F-type ATPases have 2 components, F(1) - the catalytic core - and F(0) - the membrane proton channel. F(1) has five subunits: alpha(3), beta(3), gamma(1), delta(1), epsilon(1). F(0) has three main subunits: a(1), b(2) and c(10-14). The alpha and beta chains form an alternating ring which encloses part of the gamma chain. F(1) is attached to F(0) by a central stalk formed by the gamma and epsilon chains, while a peripheral stalk is formed by the delta and b chains.

The protein localises to the cell inner membrane. Its function is as follows. F(1)F(0) ATP synthase produces ATP from ADP in the presence of a proton or sodium gradient. F-type ATPases consist of two structural domains, F(1) containing the extramembraneous catalytic core and F(0) containing the membrane proton channel, linked together by a central stalk and a peripheral stalk. During catalysis, ATP synthesis in the catalytic domain of F(1) is coupled via a rotary mechanism of the central stalk subunits to proton translocation. In terms of biological role, key component of the F(0) channel; it plays a direct role in translocation across the membrane. A homomeric c-ring of between 10-14 subunits forms the central stalk rotor element with the F(1) delta and epsilon subunits. In Bacteroides fragilis (strain ATCC 25285 / DSM 2151 / CCUG 4856 / JCM 11019 / LMG 10263 / NCTC 9343 / Onslow / VPI 2553 / EN-2), this protein is ATP synthase subunit c.